Here is a 737-residue protein sequence, read N- to C-terminus: Protein-glucosylgalactosylhydroxylysine glucosidase (737 aa).

Position 300 to 301 (300 to 301 (WD)) interacts with substrate. Residue glutamate 430 is the Proton donor of the active site. A substrate-binding site is contributed by 498–499 (KQ). A disordered region spans residues 681-737 (RSAGRIQMSPPKLPGSSSSEFPGRTFSDVRDPLQSPLWVTLGSSSPTESLTVDPASE). The span at 721–730 (LGSSSPTESL) shows a compositional bias: polar residues.

Belongs to the glycosyl hydrolase 65 family.

It carries out the reaction (5R)-5-O-[alpha-D-glucosyl-(1-&gt;2)-beta-D-galactosyl]-5-hydroxy-L-lysyl-[collagen] + H2O = (5R)-5-O-(beta-D-galactosyl)-5-hydroxy-L-lysyl-[collagen] + D-glucose. Functionally, catalyzes the hydrolysis of glucose from the disaccharide unit linked to hydroxylysine residues of collagen and collagen-like proteins. The chain is Protein-glucosylgalactosylhydroxylysine glucosidase from Homo sapiens (Human).